We begin with the raw amino-acid sequence, 338 residues long: Uroporphyrinogen decarboxylase (338 aa).

Residues arginine 25 to arginine 29, phenylalanine 44, aspartate 75, tyrosine 146, serine 201, and histidine 314 contribute to the substrate site.

The protein belongs to the uroporphyrinogen decarboxylase family. In terms of assembly, homodimer.

Its subcellular location is the cytoplasm. The enzyme catalyses uroporphyrinogen III + 4 H(+) = coproporphyrinogen III + 4 CO2. It participates in porphyrin-containing compound metabolism; protoporphyrin-IX biosynthesis; coproporphyrinogen-III from 5-aminolevulinate: step 4/4. In terms of biological role, catalyzes the decarboxylation of four acetate groups of uroporphyrinogen-III to yield coproporphyrinogen-III. The protein is Uroporphyrinogen decarboxylase of Aquifex aeolicus (strain VF5).